Reading from the N-terminus, the 500-residue chain is Taxoid 7-beta-hydroxylase (500 aa).

A helical membrane pass occupies residues 24–44 (PAILSTALTAIAGIIVLLVIT). Cys-446 is a heme binding site.

It belongs to the cytochrome P450 family.

The protein localises to the microsome membrane. The catalysed reaction is taxusin + reduced [NADPH--hemoprotein reductase] + O2 = 7beta-hydroxytaxusin + oxidized [NADPH--hemoprotein reductase] + H2O + H(+). It carries out the reaction 2alpha-hydroxytaxusin + reduced [NADPH--hemoprotein reductase] + O2 = 2alpha,7beta-dihydroxytaxusin + oxidized [NADPH--hemoprotein reductase] + H2O + H(+). The enzyme catalyses 7beta-hydroxytaxusin + reduced [NADPH--hemoprotein reductase] + O2 = 2alpha,7beta-dihydroxytaxusin + oxidized [NADPH--hemoprotein reductase] + H2O + H(+). It functions in the pathway alkaloid biosynthesis; taxol biosynthesis. Functionally, catalyzes the conversion of taxusin to 7-beta-hydroxytaxusin in taxol biosynthesis. Catalyzes the conversion of 2-alpha-hydroxytaxusin to 2-alpha-7-beta-hydroxytaxusin in taxol biosynthesis. In Taxus cuspidata (Japanese yew), this protein is Taxoid 7-beta-hydroxylase.